The chain runs to 555 residues: Cilia- and flagella-associated protein 184 (555 aa).

Positions 1-12 are enriched in basic and acidic residues; sequence MDVSSEHTKDPG. The disordered stretch occupies residues 1-202; the sequence is MDVSSEHTKD…KSQEEGKRLY (202 aa). Composition is skewed to acidic residues over residues 41–54 and 95–105; these read GELE…EEEQ and PEPEEPAEVGA. A compositionally biased stretch (low complexity) spans 106–117; that stretch reads EEPAQPEPGAGP. Over residues 118-131 the composition is skewed to acidic residues; the sequence is EELEAEAGAEELEQ. A compositionally biased stretch (basic and acidic residues) spans 174-202; it reads ETQRDGAESKERDGEGRPAKSQEEGKRLY. Coiled-coil stretches lie at residues 305–441 and 505–531; these read YHQE…NSVQ and DSLL…LKRH.

Belongs to the CFAP184 family. In terms of assembly, forms a complex with CFAP263; the interaction is required for functional activity in cilia.

It localises to the cell projection. The protein resides in the cilium. Its subcellular location is the cytoplasm. It is found in the cytoskeleton. The protein localises to the microtubule organizing center. It localises to the centrosome. In terms of biological role, in complex with CFAP263, acts as a regulator of ciliary beating that connects radial spoke 3 (RS3) to the inner dynein arm (IDA) and the nexin-dynein regulatory complex (N-DRC). The complex is positioned parallel to N-DRC and forms a connection between the arch at the base of RS3, the IDA tail and N-DRC. The protein is Cilia- and flagella-associated protein 184 of Homo sapiens (Human).